The following is a 202-amino-acid chain: Probable septum site-determining protein MinC (202 aa).

It belongs to the MinC family. As to quaternary structure, interacts with MinD and FtsZ.

Cell division inhibitor that blocks the formation of polar Z ring septums. Rapidly oscillates between the poles of the cell to destabilize FtsZ filaments that have formed before they mature into polar Z rings. Prevents FtsZ polymerization. The sequence is that of Probable septum site-determining protein MinC from Sulfurihydrogenibium sp. (strain YO3AOP1).